The primary structure comprises 182 residues: Probable RNA 2'-phosphotransferase (182 aa).

It belongs to the KptA/TPT1 family.

Functionally, removes the 2'-phosphate from RNA via an intermediate in which the phosphate is ADP-ribosylated by NAD followed by a presumed transesterification to release the RNA and generate ADP-ribose 1''-2''-cyclic phosphate (APPR&gt;P). May function as an ADP-ribosylase. The protein is Probable RNA 2'-phosphotransferase of Trichormus variabilis (strain ATCC 29413 / PCC 7937) (Anabaena variabilis).